The chain runs to 126 residues: Cystatin-like protein (126 aa).

The short motif at 72 to 76 (QVVAG) is the Secondary area of contact element. Cysteine 94 and cysteine 115 are oxidised to a cystine.

This sequence belongs to the cystatin family.

The protein is Cystatin-like protein (Cys) of Drosophila melanogaster (Fruit fly).